We begin with the raw amino-acid sequence, 120 residues long: Large ribosomal subunit protein uL18 (120 aa).

It belongs to the universal ribosomal protein uL18 family. As to quaternary structure, part of the 50S ribosomal subunit; part of the 5S rRNA/L5/L18/L25 subcomplex. Contacts the 5S and 23S rRNAs.

Its function is as follows. This is one of the proteins that bind and probably mediate the attachment of the 5S RNA into the large ribosomal subunit, where it forms part of the central protuberance. This is Large ribosomal subunit protein uL18 from Bordetella bronchiseptica (strain ATCC BAA-588 / NCTC 13252 / RB50) (Alcaligenes bronchisepticus).